A 1179-amino-acid chain; its full sequence is Integrin alpha-E (1179 aa).

An N-terminal signal peptide occupies residues 1-18 (MWLFHTLLCIASLALLAA). Residues 19 to 1124 (FNVDVARPWL…VFLKDEKYHS (1106 aa)) are Extracellular-facing. 2 FG-GAP repeats span residues 22–79 (DVAR…EILC) and 80–138 (HPVE…PQAQ). A glycan (N-linked (GlcNAc...) asparagine) is linked at Asn49. Disulfide bonds link Cys70/Cys79 and Cys126/Cys159. Residues 145 to 199 (ENLLDPDARVDTGDCYSNKEGGGEDDVNTARQRRALEKEEEEDKEEEEDEEEEEA) form an X-domain (extra domain) region. Residues 158–200 (DCYSNKEGGGEDDVNTARQRRALEKEEEEDKEEEEDEEEEEAG) are disordered. Acidic residues predominate over residues 182–200 (KEEEEDKEEEEDEEEEEAG). In terms of domain architecture, VWFA spans 200-389 (GTEIAIILDG…SKLRYNIISM (190 aa)). Residues Asn271 and Asn321 are each glycosylated (N-linked (GlcNAc...) asparagine). The FG-GAP 3 repeat unit spans residues 390 to 442 (EGTVGDALHYQLAQIGFSAQILDERQVLLGAVGAFDWSGGALLYDTRSRRGRF). Asn444 is a glycosylation site (N-linked (GlcNAc...) asparagine). FG-GAP repeat units follow at residues 447–499 (AAAA…GREA), 500–560 (SFLP…DGSF), 563–627 (ARIL…GLSA), and 631–691 (QRIR…FTPS). Residues Asp522, Asp524, Asp526, Asp530, Asp586, Ser588, Asp590, Asp594, Asp654, Ser656, Asp658, and Asp662 each coordinate Ca(2+). Cys706 and Cys762 are disulfide-bonded. N-linked (GlcNAc...) asparagine glycosylation is found at Asn726 and Asn782. Cys823 and Cys829 are oxidised to a cystine. A glycan (N-linked (GlcNAc...) asparagine) is linked at Asn857. Cys893 and Cys907 form a disulfide bridge. Residues Asn934 and Asn954 are each glycosylated (N-linked (GlcNAc...) asparagine). 2 cysteine pairs are disulfide-bonded: Cys1008-Cys1033 and Cys1041-Cys1057. 2 N-linked (GlcNAc...) asparagine glycosylation sites follow: Asn1065 and Asn1096. A helical transmembrane segment spans residues 1125–1147 (LPIIIKGSVGGLLVLIVILVILF). The Cytoplasmic segment spans residues 1148–1179 (KCGFFKRKYQQLNLESIRKAQLKSENLLEEEN). A GFFKR motif motif is present at residues 1150–1154 (GFFKR).

This sequence belongs to the integrin alpha chain family. In terms of assembly, heterodimer of an alpha and a beta subunit. The alpha subunit is composed of a heavy and a light chains linked by a disulfide bond. Alpha-E associates with beta-7. In terms of tissue distribution, expressed on a subclass of T-lymphocytes known as intra-epithelial lymphocytes which are located between mucosal epithelial cells.

It is found in the membrane. Its function is as follows. Integrin alpha-E/beta-7 is a receptor for E-cadherin. It mediates adhesion of intra-epithelial T-lymphocytes to epithelial cell monolayers. This is Integrin alpha-E (ITGAE) from Homo sapiens (Human).